The chain runs to 1888 residues: E3 ubiquitin-protein ligase UBR3 (1888 aa).

The interval 1-24 (MAAAAAAAVGGQQPSQPELPAPGL) is disordered. The UBR-type zinc-finger motif lies at 118–189 (ALCGLVWTAN…ESGFCKRHQI (72 aa)). The tract at residues 339 to 362 (GQVDSSDEDDQDGSQGLGKRKRVK) is disordered. Residues Ser343 and Ser344 each carry the phosphoserine modification. A run of 2 helical transmembrane segments spans residues 761-781 (MLEGALTFLVILLSLRLHLGM) and 919-939 (LLHCKTLHIVLFTLLYKILMD). Disordered regions lie at residues 1008–1028 (APEVKRDSPASTSSDNLGSLQ) and 1164–1186 (VPPKKVTAAEKKTLDKEERRQKA). Over residues 1016–1028 (PASTSSDNLGSLQ) the composition is skewed to polar residues. Residues 1168–1199 (KVTAAEKKTLDKEERRQKARERQQKLLAEFAS) are a coiled coil. Basic and acidic residues predominate over residues 1170 to 1186 (TAAEKKTLDKEERRQKA). A Phosphoserine modification is found at Ser1199. The segment at 1306-1364 (DSSCLLAVSIGWEGGVYVQTCGHTLHIDCHKSYMESLRNDQVLQGFSVDKGEFTCPLCR) adopts an RING-type; degenerate zinc-finger fold. A helical transmembrane segment spans residues 1806 to 1826 (QNCGAGTGIFLLINASVIIII).

It belongs to the E3 ubiquitin-protein ligase UBR1-like family. In terms of assembly, interacts with UBE2A and UBE2B.

It is found in the membrane. The enzyme catalyses S-ubiquitinyl-[E2 ubiquitin-conjugating enzyme]-L-cysteine + [acceptor protein]-L-lysine = [E2 ubiquitin-conjugating enzyme]-L-cysteine + N(6)-ubiquitinyl-[acceptor protein]-L-lysine.. It participates in protein modification; protein ubiquitination. Its function is as follows. E3 ubiquitin-protein ligase which is a component of the N-end rule pathway. Does not bind to proteins bearing specific N-terminal residues that are destabilizing according to the N-end rule, leading to their ubiquitination and subsequent degradation. May play a role in Shh signaling by mediating the ubiquitination of Kif7. May be important for MYH9 function in certain tissues, possibly by regulating the ubiquitination of MYH9 and consequently affecting its interaction with MYO7A. This is E3 ubiquitin-protein ligase UBR3 (UBR3) from Homo sapiens (Human).